The primary structure comprises 697 residues: Exocyst complex component 7 (697 aa).

Residues 1-384 (MIPPQEASAR…FSTVLTVFPI (384 aa)) form an SEC8 and ARHQ binding region. Coiled coils occupy residues 5-42 (QEAS…TRNM) and 63-85 (VHKQ…SCLD). Ser-133 is modified (phosphoserine). The tract at residues 238-270 (FRKSSSSSGVPYSPAIPNKRKDTPTKKPIKRPG) is disordered.

It belongs to the EXO70 family. The exocyst complex is composed of EXOC1, EXOC2, EXOC3, EXOC4, EXOC5, EXOC6, EXOC7 and EXOC8. Interacts with RAB11FIP3. Interacts with ARHQ in a GTP-dependent manner.

The protein resides in the cytoplasm. The protein localises to the cytosol. Its subcellular location is the cell membrane. It localises to the midbody. It is found in the midbody ring. Its function is as follows. Component of the exocyst complex involved in the docking of exocytic vesicles with fusion sites on the plasma membrane. In adipocytes, plays a crucial role in targeting SLC2A4 vesicle to the plasma membrane in response to insulin, perhaps directing the vesicle to the precise site of fusion. It is required for neuron survival and plays an essential role in cortical development. The sequence is that of Exocyst complex component 7 (Exoc7) from Mus musculus (Mouse).